A 326-amino-acid polypeptide reads, in one-letter code: Mitochondrial glycine transporter (326 aa).

3 Solcar repeats span residues 22–106 (SKTT…LRTS), 135–216 (SANL…LKRY), and 228–312 (SSSS…LILR). The next 6 membrane-spanning stretches (helical) occupy residues 28-53 (FGAGLLSGLTSSILLQPADLLKTRVQ), 81-107 (GTLPSALRTGFGSALYFTSLNALRTSL), 138-163 (LATGAAARVAAGFVMMPVTVLKVRYE), 191-214 (GFGATAARDAPYAGLYVLFYEQLK), 232-258 (INFVSGGLAAGLATAITNPFDAVKTRL), and 287-305 (GLGLRIGRKALSSALAWTV).

It belongs to the mitochondrial carrier (TC 2.A.29) family. SLC25A38 subfamily.

It is found in the mitochondrion inner membrane. The enzyme catalyses glycine(in) = glycine(out). In terms of biological role, mitochondrial glycine transporter that imports glycine into the mitochondrial matrix. Plays an important role in providing glycine for the first enzymatic step in heme biosynthesis, the condensation of glycine with succinyl-CoA to produce 5-aminolevulinate (ALA) in the mitochondrial matrix. The polypeptide is Mitochondrial glycine transporter (Emericella nidulans (strain FGSC A4 / ATCC 38163 / CBS 112.46 / NRRL 194 / M139) (Aspergillus nidulans)).